We begin with the raw amino-acid sequence, 588 residues long: Tripartite motif-containing protein 29 (588 aa).

Residues 1–66 form a disordered region; that stretch reads MEAADASRSN…GSALKPGEGR (66 aa). 4 positions are modified to phosphoserine: Ser-21, Ser-28, Ser-58, and Ser-104. Tyr-106 bears the Phosphotyrosine mark. The segment at 220–260 adopts a B box-type zinc-finger fold; sequence FEARKCPVHGKTMELFCQTDQTCICYLCMFQEHKNHSTVTV. Cys-225, His-228, Cys-247, and His-252 together coordinate Zn(2+). Positions 259–352 form a coiled coil; the sequence is TVEEAKAEKE…VKVIMDALDE (94 aa). A Phosphothreonine modification is found at Thr-476. Phosphoserine is present on Ser-489.

Interacts with VIM and HINT1. Interacts with IKBKG/NEMO. Interacts with STING1. Post-translationally, constitutively phosphorylated by PKC on serine/threonine in A431 cells. Expressed in placenta, prostate and thymus.

The protein resides in the cytoplasm. Its subcellular location is the lysosome. Functionally, plays a crucial role in the regulation of macrophage activation in response to viral or bacterial infections within the respiratory tract. Mechanistically, TRIM29 interacts with IKBKG/NEMO in the lysosome where it induces its 'Lys-48' ubiquitination and subsequent degradation. In turn, the expression of type I interferons and the production of pro-inflammatory cytokines are inhibited. Additionally, induces the 'Lys-48' ubiquitination of STING1 in a similar way, leading to its degradation. This chain is Tripartite motif-containing protein 29 (TRIM29), found in Homo sapiens (Human).